Consider the following 380-residue polypeptide: MDPNLRKSHPLLKMINNSLIDLPTPSNISAWWNFGSLLGTCLATQIITGLLLAMHYTADTTVAFSSVAHTCRNVQYGWLIRNLHANGASFFFICIYLHIGRGFYYGSYLYQETWNTGVVLLLTLMATAFVGYVLPWGQMSFWGATVITNLFSAIPYIGQTLVEWAWGGFSVDNPTLTGFFALHFLLPFLIAGLTLIHLTLLHESGSNNPLGIVSNCDKIPFHPYFSTKDLLGFIIMLTPLMTLALFSPNLLGDPKNFTPANPLVTPPHIKPEWYFLFAYAILRSIPNQLGGVLALTASVLVLFLSPFLHKSKQRTMTFRPLSQILFWTLVANLLILTWVGSQPVEHPFIIIGQLASLTYFTILLILFPLIGALEYKMLNY.

4 helical membrane passes run 34–54 (FGSLLGTCLATQIITGLLLAM), 78–99 (WLIRNLHANGASFFFICIYLHI), 114–134 (WNTGVVLLLTLMATAFVGYVL), and 179–199 (FFALHFLLPFLIAGLTLIHLT). Heme b is bound by residues His-84 and His-98. Positions 183 and 197 each coordinate heme b. An a ubiquinone-binding site is contributed by His-202. Helical transmembrane passes span 227–247 (TKDLLGFIIMLTPLMTLALFS), 289–309 (LGGVLALTASVLVLFLSPFLH), 321–341 (LSQILFWTLVANLLILTWVGS), and 348–368 (FIIIGQLASLTYFTILLILFP).

This sequence belongs to the cytochrome b family. As to quaternary structure, the cytochrome bc1 complex contains 11 subunits: 3 respiratory subunits (MT-CYB, CYC1 and UQCRFS1), 2 core proteins (UQCRC1 and UQCRC2) and 6 low-molecular weight proteins (UQCRH/QCR6, UQCRB/QCR7, UQCRQ/QCR8, UQCR10/QCR9, UQCR11/QCR10 and a cleavage product of UQCRFS1). This cytochrome bc1 complex then forms a dimer. Requires heme b as cofactor.

The protein resides in the mitochondrion inner membrane. In terms of biological role, component of the ubiquinol-cytochrome c reductase complex (complex III or cytochrome b-c1 complex) that is part of the mitochondrial respiratory chain. The b-c1 complex mediates electron transfer from ubiquinol to cytochrome c. Contributes to the generation of a proton gradient across the mitochondrial membrane that is then used for ATP synthesis. The polypeptide is Cytochrome b (MT-CYB) (Aerodramus vulcanorum (Volcano swiftlet)).